We begin with the raw amino-acid sequence, 485 residues long: NADH-quinone oxidoreductase subunit N (485 aa).

14 helical membrane-spanning segments follow: residues 8–28, 35–55, 75–95, 104–124, 125–145, 159–179, 203–223, 235–255, 271–291, 297–317, 326–346, 383–403, 406–426, and 455–475; these read LIAL…MLSI, FINT…LYFV, LYIG…YSWL, EFYL…CANH, LASL…LIGY, YMLL…LLYA, ILSG…LVPF, PAPV…AVVI, TVLT…ALTQ, LLGY…VAVQ, VGIY…VVSL, LAGI…VLGV, ELWW…YYYL, and MVVL…QPLI.

The protein belongs to the complex I subunit 2 family. NDH-1 is composed of 13 different subunits. Subunits NuoA, H, J, K, L, M, N constitute the membrane sector of the complex.

It is found in the cell inner membrane. It carries out the reaction a quinone + NADH + 5 H(+)(in) = a quinol + NAD(+) + 4 H(+)(out). Functionally, NDH-1 shuttles electrons from NADH, via FMN and iron-sulfur (Fe-S) centers, to quinones in the respiratory chain. The immediate electron acceptor for the enzyme in this species is believed to be ubiquinone. Couples the redox reaction to proton translocation (for every two electrons transferred, four hydrogen ions are translocated across the cytoplasmic membrane), and thus conserves the redox energy in a proton gradient. The chain is NADH-quinone oxidoreductase subunit N from Photorhabdus laumondii subsp. laumondii (strain DSM 15139 / CIP 105565 / TT01) (Photorhabdus luminescens subsp. laumondii).